The sequence spans 297 residues: tRNA dimethylallyltransferase (297 aa).

15 to 22 serves as a coordination point for ATP; the sequence is GPTASGKS. 17–22 contributes to the substrate binding site; the sequence is TASGKS. 2 interaction with substrate tRNA regions span residues 40–43 and 164–168; these read DSMQ and QRIVR.

It belongs to the IPP transferase family. In terms of assembly, monomer. Mg(2+) serves as cofactor.

It carries out the reaction adenosine(37) in tRNA + dimethylallyl diphosphate = N(6)-dimethylallyladenosine(37) in tRNA + diphosphate. Catalyzes the transfer of a dimethylallyl group onto the adenine at position 37 in tRNAs that read codons beginning with uridine, leading to the formation of N6-(dimethylallyl)adenosine (i(6)A). This Rhizobium johnstonii (strain DSM 114642 / LMG 32736 / 3841) (Rhizobium leguminosarum bv. viciae) protein is tRNA dimethylallyltransferase.